Consider the following 332-residue polypeptide: Ketol-acid reductoisomerase (NADP(+)) (332 aa).

The KARI N-terminal Rossmann domain maps to 2–182 (ANIYYDEDAS…GATRAGLIET (181 aa)). NADP(+) is bound by residues 25–28 (YGSQ), Ser-51, Ser-53, and 83–86 (DTVQ). His-108 is an active-site residue. Gly-134 lines the NADP(+) pocket. Residues 183–327 (TFKEETETDL…KELRKMMPWL (145 aa)) form the KARI C-terminal knotted domain. The Mg(2+) site is built by Asp-191, Glu-195, Glu-227, and Glu-231. Ser-252 serves as a coordination point for substrate.

Belongs to the ketol-acid reductoisomerase family. The cofactor is Mg(2+).

The enzyme catalyses (2R)-2,3-dihydroxy-3-methylbutanoate + NADP(+) = (2S)-2-acetolactate + NADPH + H(+). It catalyses the reaction (2R,3R)-2,3-dihydroxy-3-methylpentanoate + NADP(+) = (S)-2-ethyl-2-hydroxy-3-oxobutanoate + NADPH + H(+). The protein operates within amino-acid biosynthesis; L-isoleucine biosynthesis; L-isoleucine from 2-oxobutanoate: step 2/4. Its pathway is amino-acid biosynthesis; L-valine biosynthesis; L-valine from pyruvate: step 2/4. Functionally, involved in the biosynthesis of branched-chain amino acids (BCAA). Catalyzes an alkyl-migration followed by a ketol-acid reduction of (S)-2-acetolactate (S2AL) to yield (R)-2,3-dihydroxy-isovalerate. In the isomerase reaction, S2AL is rearranged via a Mg-dependent methyl migration to produce 3-hydroxy-3-methyl-2-ketobutyrate (HMKB). In the reductase reaction, this 2-ketoacid undergoes a metal-dependent reduction by NADPH to yield (R)-2,3-dihydroxy-isovalerate. The sequence is that of Ketol-acid reductoisomerase (NADP(+)) from Sulfurihydrogenibium sp. (strain YO3AOP1).